Here is a 188-residue protein sequence, read N- to C-terminus: MNITATVLLAFGMSMDAFAASIGKGATLHKPKFSEALRTGLIFGAVETLTPLIGWGMGMLASRFVLEWNHWIAFVLLIFLGGRMIIEGFRGADDEDEEPRRRHGFWLLVTTAIATSLDAMAVGVGLAFLQVNIIATALAIGCATLIMSTLGMMVGRFIGSIIGKKAEILGGLVLIGIGVQILWTHFHG.

5 helical membrane-spanning segments follow: residues 3 to 23 (ITAT…ASIG), 66 to 86 (LEWN…RMII), 106 to 128 (WLLV…GLAF), 143 to 163 (ATLI…SIIG), and 168 to 188 (ILGG…HFHG).

Belongs to the MntP (TC 9.B.29) family.

The protein resides in the cell inner membrane. Its function is as follows. Probably functions as a manganese efflux pump. This Escherichia coli O139:H28 (strain E24377A / ETEC) protein is Probable manganese efflux pump MntP.